The following is a 187-amino-acid chain: Ribonuclease HII (187 aa).

Residues 1–187 (MIILGIDEAG…YKPVQVLLNE (187 aa)) form the RNase H type-2 domain. Residues Asp-7, Glu-8, and Asp-99 each contribute to the a divalent metal cation site.

Belongs to the RNase HII family. Mn(2+) serves as cofactor. Mg(2+) is required as a cofactor.

It is found in the cytoplasm. It catalyses the reaction Endonucleolytic cleavage to 5'-phosphomonoester.. In terms of biological role, endonuclease that specifically degrades the RNA of RNA-DNA hybrids. In Francisella tularensis subsp. tularensis (strain FSC 198), this protein is Ribonuclease HII.